The chain runs to 308 residues: D-alanine--D-alanine ligase (308 aa).

The 196-residue stretch at 108 to 303 (KLVWKAAGLP…YEALCLKVLE (196 aa)) folds into the ATP-grasp domain. 134-189 (EAELGLPMFVKPACEGSSLGVTKVRKAGELAQAYAEARKFDPLVLAEQFVGGGEYT) contributes to the ATP binding site. Mg(2+)-binding residues include D257, E270, and N272.

The protein belongs to the D-alanine--D-alanine ligase family. Mg(2+) serves as cofactor. Requires Mn(2+) as cofactor.

It localises to the cytoplasm. The enzyme catalyses 2 D-alanine + ATP = D-alanyl-D-alanine + ADP + phosphate + H(+). Its pathway is cell wall biogenesis; peptidoglycan biosynthesis. In terms of biological role, cell wall formation. This Laribacter hongkongensis (strain HLHK9) protein is D-alanine--D-alanine ligase.